Here is a 291-residue protein sequence, read N- to C-terminus: Bifunctional protein FolD (291 aa).

Residues glycine 168–glycine 170, threonine 195, and isoleucine 236 contribute to the NADP(+) site.

It belongs to the tetrahydrofolate dehydrogenase/cyclohydrolase family. As to quaternary structure, homodimer.

The catalysed reaction is (6R)-5,10-methylene-5,6,7,8-tetrahydrofolate + NADP(+) = (6R)-5,10-methenyltetrahydrofolate + NADPH. It carries out the reaction (6R)-5,10-methenyltetrahydrofolate + H2O = (6R)-10-formyltetrahydrofolate + H(+). The protein operates within one-carbon metabolism; tetrahydrofolate interconversion. Catalyzes the oxidation of 5,10-methylenetetrahydrofolate to 5,10-methenyltetrahydrofolate and then the hydrolysis of 5,10-methenyltetrahydrofolate to 10-formyltetrahydrofolate. The protein is Bifunctional protein FolD of Bifidobacterium longum subsp. infantis (strain ATCC 15697 / DSM 20088 / JCM 1222 / NCTC 11817 / S12).